Consider the following 204-residue polypeptide: 3-isopropylmalate dehydratase small subunit (204 aa).

Belongs to the LeuD family. LeuD type 1 subfamily. Heterodimer of LeuC and LeuD.

It catalyses the reaction (2R,3S)-3-isopropylmalate = (2S)-2-isopropylmalate. It participates in amino-acid biosynthesis; L-leucine biosynthesis; L-leucine from 3-methyl-2-oxobutanoate: step 2/4. Its function is as follows. Catalyzes the isomerization between 2-isopropylmalate and 3-isopropylmalate, via the formation of 2-isopropylmaleate. This is 3-isopropylmalate dehydratase small subunit from Vesicomyosocius okutanii subsp. Calyptogena okutanii (strain HA).